The primary structure comprises 222 residues: DnaJ homolog subfamily B member 9 (222 aa).

The signal sequence occupies residues 1–23 (MATPQSVFVFAICILMITELILA). The region spanning 26-90 (SYYDILGVPK…HRRKEYDTVG (65 aa)) is the J domain. The interval 91 to 222 (HTAFTNGKGQ…VTTYTDCSGQ (132 aa)) is divergent targeting domain. Ser133 is subject to Phosphoserine.

As to quaternary structure, interacts with HSPA5/BiP; interaction is direct. Interacts with ERN1/IRE1 (via the luminal region). Interacts with DERL1.

The protein resides in the endoplasmic reticulum lumen. Co-chaperone for Hsp70 protein HSPA5/BiP that acts as a key repressor of the ERN1/IRE1-mediated unfolded protein response (UPR). J domain-containing co-chaperones stimulate the ATPase activity of Hsp70 proteins and are required for efficient substrate recognition by Hsp70 proteins. In the unstressed endoplasmic reticulum, interacts with the luminal region of ERN1/IRE1 and selectively recruits HSPA5/BiP: HSPA5/BiP disrupts the dimerization of the active ERN1/IRE1 luminal region, thereby inactivating ERN1/IRE1. Also involved in endoplasmic reticulum-associated degradation (ERAD) of misfolded proteins. Required for survival of B-cell progenitors and normal antibody production. The sequence is that of DnaJ homolog subfamily B member 9 from Cricetulus griseus (Chinese hamster).